We begin with the raw amino-acid sequence, 278 residues long: MAAAAFVPIPTDTYKLGFIGAGKMAESIARGVVKSGVLPASRIRTAHLGSARRDAFESFGVKVLDRNDQVVEDSDVIIFSVKPQIVKEVVLQLRPLLSEKQLLVSIVAGVKLKELEDWAGHSRFIRVMPNTPAAVGEAASVMSLGATATGEDGELITKLFGAIGKIWKADEKLFDAVTGLSGSGPAYIFLAIEALADGGVAAGLPRELALGLASQTVLGAASMVARGGKHPGQLKDDVASAGGTTIAGIHELEKGGFRGTLMNAVVSATKRSQEIFKR.

The protein belongs to the pyrroline-5-carboxylate reductase family.

The protein resides in the cytoplasm. It catalyses the reaction L-proline + NADP(+) = (S)-1-pyrroline-5-carboxylate + NADPH + 2 H(+). The enzyme catalyses L-proline + NAD(+) = (S)-1-pyrroline-5-carboxylate + NADH + 2 H(+). The protein operates within amino-acid biosynthesis; L-proline biosynthesis; L-proline from L-glutamate 5-semialdehyde: step 1/1. In Actinidia chinensis var. chinensis (Chinese soft-hair kiwi), this protein is Pyrroline-5-carboxylate reductase.